A 469-amino-acid chain; its full sequence is MVRVRFAPSPTGFLHVGGARTALFNFLFARKEKGKFILRIEDTDLERSEREYEEKLMESLRWLGLLWDEGPDVGGDHGPYMQSERVEIYREHAERLVKEGKAYYVYAYPEEIEEMREKLLSEGKAPHYSQEMFEKFDTPERRREYEEKGLRPAVFFKMPRKDYVLNDVVKGEVVFKTGAIGDFVIMRSNGLPTYNFACVVDDMLMEITHVIRGDDHLSNTLRQLALYEAFEKAPPVFAHVSTILGPDGKKLSKRHGATSVEAFRDMGYLPEALVNYLALLGWSHPEGKELLTLEELISSFSLDRLSPNPAIFDPQKLKWMNGYYLRNMPIEKLAELAKPFFEKAGIKIIDEEYFKKVLEITKERVEVLSEFPEESRFFFEDPAPVEIPEEMKEVFSQLKEELQNVRWTMEEITPVFKKVLKQHGVKPKEFYMTLRRVLTGREEGPELVNIIPLLGKEIFLRRIERSLGG.

The 'HIGH' region signature appears at 8 to 18; the sequence is PSPTGFLHVGG. The short motif at 250–254 is the 'KMSKS' region element; sequence KLSKR. Lysine 253 is an ATP binding site.

The protein belongs to the class-I aminoacyl-tRNA synthetase family. Glutamate--tRNA ligase type 1 subfamily. In terms of assembly, monomer.

The protein localises to the cytoplasm. It catalyses the reaction tRNA(Glu) + L-glutamate + ATP = L-glutamyl-tRNA(Glu) + AMP + diphosphate. Functionally, catalyzes the attachment of glutamate to tRNA(Glu) in a two-step reaction: glutamate is first activated by ATP to form Glu-AMP and then transferred to the acceptor end of tRNA(Glu). The polypeptide is Glutamate--tRNA ligase 2 (Thermotoga sp. (strain RQ2)).